Consider the following 137-residue polypeptide: Large ribosomal subunit protein uL16 (137 aa).

This sequence belongs to the universal ribosomal protein uL16 family. As to quaternary structure, part of the 50S ribosomal subunit.

Its function is as follows. Binds 23S rRNA and is also seen to make contacts with the A and possibly P site tRNAs. In Mesoplasma florum (strain ATCC 33453 / NBRC 100688 / NCTC 11704 / L1) (Acholeplasma florum), this protein is Large ribosomal subunit protein uL16.